A 558-amino-acid polypeptide reads, in one-letter code: V-set and immunoglobulin domain-containing protein 10 (558 aa).

The first 20 residues, 1–20 (MAGLRVLLCLGALLARQGSA), serve as a signal peptide directing secretion. At 21 to 426 (GLQLLLNPSR…IWLSVKEPLN (406 aa)) the chain is on the extracellular side. Residues N32, N60, N121, N150, N159, and N218 are each glycosylated (N-linked (GlcNAc...) asparagine). Ig-like C2-type domains are found at residues 37–140 (PNSE…RLRV), 144–235 (PAYV…RKVT), 248–327 (PQCS…VKLS), and 332–420 (PSQP…IWLS). C65 and C124 are joined by a disulfide. 2 cysteine pairs are disulfide-bonded: C174–C221 and C265–C308. N344 carries an N-linked (GlcNAc...) asparagine glycan. A disulfide bridge connects residues C349 and C404. Residues 427–447 (IGGIVGTVVSLLLLGLAVVSG) form a helical membrane-spanning segment. Topologically, residues 448–558 (LTLYYSPAFW…GIVQEDGKPV (111 aa)) are cytoplasmic. Residues 477–506 (DSEEEEEEEEEEEEKEDVAEEVEQETNETE) are compositionally biased toward acidic residues. 2 disordered regions span residues 477 to 515 (DSEE…ISKH) and 532 to 558 (MGNG…GKPV).

Its subcellular location is the membrane. The polypeptide is V-set and immunoglobulin domain-containing protein 10 (Vsig10) (Mus musculus (Mouse)).